Consider the following 407-residue polypeptide: Phosphopentomutase (407 aa).

Mn(2+)-binding residues include D10, D306, H311, D347, H348, and H359.

Belongs to the phosphopentomutase family. The cofactor is Mn(2+).

The protein resides in the cytoplasm. The enzyme catalyses 2-deoxy-alpha-D-ribose 1-phosphate = 2-deoxy-D-ribose 5-phosphate. It carries out the reaction alpha-D-ribose 1-phosphate = D-ribose 5-phosphate. Its pathway is carbohydrate degradation; 2-deoxy-D-ribose 1-phosphate degradation; D-glyceraldehyde 3-phosphate and acetaldehyde from 2-deoxy-alpha-D-ribose 1-phosphate: step 1/2. Functionally, isomerase that catalyzes the conversion of deoxy-ribose 1-phosphate (dRib-1-P) and ribose 1-phosphate (Rib-1-P) to deoxy-ribose 5-phosphate (dRib-5-P) and ribose 5-phosphate (Rib-5-P), respectively. This chain is Phosphopentomutase, found in Pectobacterium atrosepticum (strain SCRI 1043 / ATCC BAA-672) (Erwinia carotovora subsp. atroseptica).